The following is a 75-amino-acid chain: uncharacterized protein (75 aa).

This is an uncharacterized protein from Escherichia coli (Bacteriophage T4).